A 148-amino-acid chain; its full sequence is uncharacterized protein (148 aa).

Residues 1–17 show a composition bias toward low complexity; it reads MCPPVRQRPAQAPPAKR. Disordered regions lie at residues 1–86 and 122–148; these read MCPP…VQSP and RAHR…TSPC. A compositionally biased stretch (basic residues) spans 38-57; it reads RPPKMQRRPRPPVAKRRRFP. Residues 134 to 148 are compositionally biased toward polar residues; that stretch reads QSRQRPSPDSQTSPC.

This sequence belongs to the Epstein-Barr virus BLLF2 family.

This is an uncharacterized protein from Homo sapiens (Human).